The following is a 154-amino-acid chain: Large ribosomal subunit protein uL13 (154 aa).

Belongs to the universal ribosomal protein uL13 family. As to quaternary structure, part of the 50S ribosomal subunit.

This protein is one of the early assembly proteins of the 50S ribosomal subunit, although it is not seen to bind rRNA by itself. It is important during the early stages of 50S assembly. The protein is Large ribosomal subunit protein uL13 of Borrelia garinii subsp. bavariensis (strain ATCC BAA-2496 / DSM 23469 / PBi) (Borreliella bavariensis).